Consider the following 351-residue polypeptide: Nicotinate-nucleotide--dimethylbenzimidazole phosphoribosyltransferase (351 aa).

Glu-317 serves as the catalytic Proton acceptor.

Belongs to the CobT family.

The catalysed reaction is 5,6-dimethylbenzimidazole + nicotinate beta-D-ribonucleotide = alpha-ribazole 5'-phosphate + nicotinate + H(+). Its pathway is nucleoside biosynthesis; alpha-ribazole biosynthesis; alpha-ribazole from 5,6-dimethylbenzimidazole: step 1/2. In terms of biological role, catalyzes the synthesis of alpha-ribazole-5'-phosphate from nicotinate mononucleotide (NAMN) and 5,6-dimethylbenzimidazole (DMB). This chain is Nicotinate-nucleotide--dimethylbenzimidazole phosphoribosyltransferase, found in Ectopseudomonas mendocina (strain ymp) (Pseudomonas mendocina).